The sequence spans 561 residues: Long-chain-fatty-acid--CoA ligase (561 aa).

Residue 213–224 (YTGGTTGVAKGA) participates in ATP binding.

This sequence belongs to the ATP-dependent AMP-binding enzyme family. It depends on Mg(2+) as a cofactor.

Its subcellular location is the membrane. It carries out the reaction a long-chain fatty acid + ATP + CoA = a long-chain fatty acyl-CoA + AMP + diphosphate. It functions in the pathway lipid metabolism; fatty acid beta-oxidation. Catalyzes the esterification, concomitant with transport, of exogenous long-chain fatty acids into metabolically active CoA thioesters for subsequent degradation or incorporation into phospholipids. This Escherichia coli O6:H1 (strain CFT073 / ATCC 700928 / UPEC) protein is Long-chain-fatty-acid--CoA ligase (fadD).